The primary structure comprises 405 residues: Probable tRNA sulfurtransferase (405 aa).

One can recognise a THUMP domain in the interval 60-165 (TAVMDRLKGV…LNGVFLSGQT (106 aa)). ATP is bound by residues 183 to 184 (ML), 208 to 209 (HF), Arg-265, Gly-287, and Gln-296.

It belongs to the ThiI family.

It is found in the cytoplasm. It carries out the reaction [ThiI sulfur-carrier protein]-S-sulfanyl-L-cysteine + a uridine in tRNA + 2 reduced [2Fe-2S]-[ferredoxin] + ATP + H(+) = [ThiI sulfur-carrier protein]-L-cysteine + a 4-thiouridine in tRNA + 2 oxidized [2Fe-2S]-[ferredoxin] + AMP + diphosphate. The enzyme catalyses [ThiS sulfur-carrier protein]-C-terminal Gly-Gly-AMP + S-sulfanyl-L-cysteinyl-[cysteine desulfurase] + AH2 = [ThiS sulfur-carrier protein]-C-terminal-Gly-aminoethanethioate + L-cysteinyl-[cysteine desulfurase] + A + AMP + 2 H(+). It participates in cofactor biosynthesis; thiamine diphosphate biosynthesis. Functionally, catalyzes the ATP-dependent transfer of a sulfur to tRNA to produce 4-thiouridine in position 8 of tRNAs, which functions as a near-UV photosensor. Also catalyzes the transfer of sulfur to the sulfur carrier protein ThiS, forming ThiS-thiocarboxylate. This is a step in the synthesis of thiazole, in the thiamine biosynthesis pathway. The sulfur is donated as persulfide by IscS. The sequence is that of Probable tRNA sulfurtransferase from Levilactobacillus brevis (strain ATCC 367 / BCRC 12310 / CIP 105137 / JCM 1170 / LMG 11437 / NCIMB 947 / NCTC 947) (Lactobacillus brevis).